The sequence spans 357 residues: DNA primase small subunit PriS (357 aa).

Catalysis depends on residues aspartate 105, aspartate 107, and aspartate 259.

This sequence belongs to the eukaryotic-type primase small subunit family. Heterodimer of a small subunit (PriS) and a large subunit (PriL). Mg(2+) serves as cofactor. Mn(2+) is required as a cofactor.

Its function is as follows. Catalytic subunit of DNA primase, an RNA polymerase that catalyzes the synthesis of short RNA molecules used as primers for DNA polymerase during DNA replication. The small subunit contains the primase catalytic core and has DNA synthesis activity on its own. Binding to the large subunit stabilizes and modulates the activity, increasing the rate of DNA synthesis while decreasing the length of the DNA fragments, and conferring RNA synthesis capability. The DNA polymerase activity may enable DNA primase to also catalyze primer extension after primer synthesis. May also play a role in DNA repair. This Methanococcus maripaludis (strain C6 / ATCC BAA-1332) protein is DNA primase small subunit PriS.